Here is a 200-residue protein sequence, read N- to C-terminus: ATP-dependent Clp protease proteolytic subunit 2 (200 aa).

Serine 96 acts as the Nucleophile in catalysis. Histidine 121 is an active-site residue.

This sequence belongs to the peptidase S14 family. As to quaternary structure, fourteen ClpP subunits assemble into 2 heptameric rings which stack back to back to give a disk-like structure with a central cavity, resembling the structure of eukaryotic proteasomes.

The protein localises to the cytoplasm. It carries out the reaction Hydrolysis of proteins to small peptides in the presence of ATP and magnesium. alpha-casein is the usual test substrate. In the absence of ATP, only oligopeptides shorter than five residues are hydrolyzed (such as succinyl-Leu-Tyr-|-NHMec, and Leu-Tyr-Leu-|-Tyr-Trp, in which cleavage of the -Tyr-|-Leu- and -Tyr-|-Trp bonds also occurs).. In terms of biological role, cleaves peptides in various proteins in a process that requires ATP hydrolysis. Has a chymotrypsin-like activity. Plays a major role in the degradation of misfolded proteins. This is ATP-dependent Clp protease proteolytic subunit 2 from Synechococcus sp. (strain JA-2-3B'a(2-13)) (Cyanobacteria bacterium Yellowstone B-Prime).